The sequence spans 299 residues: MHSLATAAPVPTTLAQVDREKIYQWINELSSPETRENALLELSKKRESVPDLAPMLWHSFGTIAALLQEIVNIYPSINPPTLTAHQSNRVCNALALLQCVASHPETRSAFLAAHIPLFLYPFLHTVSKTRPFEYLRLTSLGVIGALVKTDEQEVINFLLTTEIIPLCLRIMESGSELSKTVATFILQKILLDDTGLAYICQTYERFSHVAMILGKMVLQLSKEPSARLLKHVVRCYLRLSDNPRAREALRQCLPDQLKDTTFAQVLKDDTTTKRWLAQLVKNLQEGQVTDPRGIPLPPQ.

Residue Met1 is modified to N-acetylmethionine.

The protein belongs to the CNOT9 family. Homodimer. Component of the CCR4-NOT complex; distinct complexes seem to exist that differ in the participation of probably mutually exclusive catalytic subunits. Interacts with MYB, ATF2, RARA, RARB, RARG, RXRA, RXRB and RXRG. Identified in a complex with ATF2 bound to target DNA. Interacts with NANOS2. Directly interacts with ZNF335. In terms of tissue distribution, detected in spleen, thymus, prostate, testis, ovary and intestine.

It is found in the nucleus. The protein localises to the cytoplasm. Its subcellular location is the P-body. In terms of biological role, component of the CCR4-NOT complex which is one of the major cellular mRNA deadenylases and is linked to various cellular processes including bulk mRNA degradation, miRNA-mediated repression, translational repression during translational initiation and general transcription regulation. Additional complex functions may be a consequence of its influence on mRNA expression. Involved in down-regulation of MYB- and JUN-dependent transcription. May play a role in cell differentiation. Can bind oligonucleotides, such as poly-G, poly-C or poly-T (in vitro), but the physiological relevance of this is not certain. Does not bind poly-A. Enhances ligand-dependent transcriptional activity of nuclear hormone receptors, including RARA, expect ESR1-mediated transcription that is not only slightly increased, if at all. The protein is CCR4-NOT transcription complex subunit 9 of Homo sapiens (Human).